A 493-amino-acid chain; its full sequence is Poly(ribitol-phosphate) alpha-N-acetylglucosaminyltransferase (493 aa).

UDP-N-acetyl-alpha-D-glucosamine contacts are provided by residues glycine 17, lysine 59, histidine 249, arginine 326, lysine 331, threonine 383, and 403-411; that span reads EGQGLSMIE.

The protein belongs to the glycosyltransferase group 1 family. As to quaternary structure, homotrimer.

Its subcellular location is the cytoplasm. The catalysed reaction is 4-O-[(D-ribitylphospho)(n)-di{(2R)-glycerylphospho}]-N-acetyl-beta-D-mannosaminyl-(1-&gt;4)-N-acetyl-alpha-D-glucosaminyl di-trans,octa-cis-undecaprenyl diphosphate + n UDP-N-acetyl-alpha-D-glucosamine = 4-O-([2-N-acetyl-alpha-D-glucosaminyl-1-D-ribitylphospho](n)-di{[2R]-1-glycerylphospho})-N-acetyl-beta-D-mannosaminyl-(1-&gt;4)-N-acetyl-alpha-D-glucosaminyl di-trans,octa-cis-undecaprenyl diphosphate + n UDP + n H(+). Its pathway is cell wall biogenesis; poly(ribitol phosphate) teichoic acid biosynthesis. Functionally, attaches N-acetyl-alpha-D-glucosamine residues to poly(RboP)-wall teichoic acids (WTAs). The sequence is that of Poly(ribitol-phosphate) alpha-N-acetylglucosaminyltransferase from Staphylococcus aureus (strain COL).